A 537-amino-acid chain; its full sequence is Light-independent protochlorophyllide reductase subunit B (537 aa).

Asp-36 lines the [4Fe-4S] cluster pocket. Asp-292 functions as the Proton donor in the catalytic mechanism. Substrate is bound at residue 428 to 429 (GL). The segment at 459–483 (TAGETAGQATEAATAPATPGAPLTG) is disordered.

This sequence belongs to the ChlB/BchB/BchZ family. Protochlorophyllide reductase is composed of three subunits; BchL, BchN and BchB. Forms a heterotetramer of two BchB and two BchN subunits. It depends on [4Fe-4S] cluster as a cofactor.

It carries out the reaction chlorophyllide a + oxidized 2[4Fe-4S]-[ferredoxin] + 2 ADP + 2 phosphate = protochlorophyllide a + reduced 2[4Fe-4S]-[ferredoxin] + 2 ATP + 2 H2O. It functions in the pathway porphyrin-containing compound metabolism; bacteriochlorophyll biosynthesis (light-independent). Functionally, component of the dark-operative protochlorophyllide reductase (DPOR) that uses Mg-ATP and reduced ferredoxin to reduce ring D of protochlorophyllide (Pchlide) to form chlorophyllide a (Chlide). This reaction is light-independent. The NB-protein (BchN-BchB) is the catalytic component of the complex. The sequence is that of Light-independent protochlorophyllide reductase subunit B from Chloroherpeton thalassium (strain ATCC 35110 / GB-78).